The chain runs to 203 residues: ATP-dependent Clp protease proteolytic subunit 1 (203 aa).

Serine 102 serves as the catalytic Nucleophile. The active site involves histidine 127.

The protein belongs to the peptidase S14 family. In terms of assembly, fourteen ClpP subunits assemble into 2 heptameric rings which stack back to back to give a disk-like structure with a central cavity, resembling the structure of eukaryotic proteasomes.

It localises to the cytoplasm. It carries out the reaction Hydrolysis of proteins to small peptides in the presence of ATP and magnesium. alpha-casein is the usual test substrate. In the absence of ATP, only oligopeptides shorter than five residues are hydrolyzed (such as succinyl-Leu-Tyr-|-NHMec, and Leu-Tyr-Leu-|-Tyr-Trp, in which cleavage of the -Tyr-|-Leu- and -Tyr-|-Trp bonds also occurs).. Cleaves peptides in various proteins in a process that requires ATP hydrolysis. Has a chymotrypsin-like activity. Plays a major role in the degradation of misfolded proteins. This chain is ATP-dependent Clp protease proteolytic subunit 1, found in Rhizobium johnstonii (strain DSM 114642 / LMG 32736 / 3841) (Rhizobium leguminosarum bv. viciae).